Reading from the N-terminus, the 156-residue chain is Endogenous retrovirus group K member 24 Pro protein (156 aa).

The Peptidase A2 domain occupies 21–96; the sequence is FEGLVDTGAD…IPLNLWGRDL (76 aa). Residue D26 is part of the active site. Residues 111-156 form the G-patch domain; that stretch reads YSPTSQKIMTKMGYIPGKGLGKNEDGIKIPFEAKINQKREGIGYPF.

Belongs to the peptidase A2 family. HERV class-II K(HML-2) subfamily. As to quaternary structure, active as a homodimer. In terms of processing, autoproteolytically processed at the N-terminus. Expected C-terminal autoprocessing not detected. The sequence shown is that of the processed Pro protein.

It catalyses the reaction Processing at the authentic HIV-1 PR recognition site and release of the mature p17 matrix and the p24 capsid protein, as a result of the cleavage of the -SQNY-|-PIVQ- cleavage site.. In terms of biological role, retroviral proteases have roles in processing of the primary translation products and the maturation of the viral particle. Endogenous Pro proteins may have kept, lost or modified their original function during evolution. This endogenous protein has retained most of the characteristics of retroviral proteases. The polypeptide is Endogenous retrovirus group K member 24 Pro protein (ERVK-24) (Homo sapiens (Human)).